The chain runs to 144 residues: 3-hydroxyacyl-[acyl-carrier-protein] dehydratase FabZ (144 aa).

Histidine 51 is an active-site residue.

This sequence belongs to the thioester dehydratase family. FabZ subfamily.

The protein resides in the cytoplasm. It catalyses the reaction a (3R)-hydroxyacyl-[ACP] = a (2E)-enoyl-[ACP] + H2O. Involved in unsaturated fatty acids biosynthesis. Catalyzes the dehydration of short chain beta-hydroxyacyl-ACPs and long chain saturated and unsaturated beta-hydroxyacyl-ACPs. The chain is 3-hydroxyacyl-[acyl-carrier-protein] dehydratase FabZ from Lactococcus lactis subsp. cremoris (strain SK11).